The chain runs to 610 residues: Nuclear factor 7, ovary (610 aa).

One can recognise a Tudor-knot domain in the interval 21-75 (NVGSTYPCKRSDGSQHDADIVKTRYNKQAGREEYYVHYVGLNRRQNEWVDKSRLV). The interval 79–127 (PPKEVETNGTDQEEMTEPTEQPDSKTPQKRKLEEPEPEPKKAKVEDKDA) is disordered. At Thr104 the chain carries Phosphothreonine; by CDK1. Positions 108–127 (RKLEEPEPEPKKAKVEDKDA) are enriched in basic and acidic residues. The RING-type zinc-finger motif lies at 146–186 (CPLCVELFKDPVMVACGHNFCRSCIDKVWEGQSSFACPECK). The B box-type zinc-finger motif lies at 220–261 (RPLEKCSEHDERLKLYCKDDGTLGCVICRDSLKHASHNFLPI). Zn(2+) is bound by residues Cys225, His228, Cys247, and His253. Residues 295-374 (DKIEQHNKNV…AKERMEETDS (80 aa)) are a coiled coil. The B30.2/SPRY domain occupies 415 to 610 (PIQYIMWKEL…VDALRFVHNQ (196 aa)).

In terms of assembly, monomer. Abundant in oocytes. At the neurula stage, low expression in dorsal embryo region including neural folds and somites.

It localises to the nucleus. Transcription factor that determines dorsal-ventral body axis. In Xenopus laevis (African clawed frog), this protein is Nuclear factor 7, ovary.